A 315-amino-acid chain; its full sequence is Gamma-hemolysin component C (315 aa).

The signal sequence occupies residues 1–29; sequence MLKNKILATTLSVSLLAPLANPLLENAKA.

The protein belongs to the aerolysin family. Toxicity requires sequential binding and synergistic association of a class S and a class F component which form heterooligomeric complexes. HlgC (class S) associates with HlgB (class F) thus forming an CB toxin.

Toxin that seems to act by forming pores in the membrane of the cell. Has a hemolytic and a leucotoxic activity. The protein is Gamma-hemolysin component C (hlgC) of Staphylococcus aureus (strain MRSA252).